A 264-amino-acid chain; its full sequence is Hydroxyethylthiazole kinase (264 aa).

M40 is a binding site for substrate. ATP contacts are provided by K116 and T161. Residue G188 coordinates substrate.

Belongs to the Thz kinase family. Mg(2+) serves as cofactor.

It carries out the reaction 5-(2-hydroxyethyl)-4-methylthiazole + ATP = 4-methyl-5-(2-phosphooxyethyl)-thiazole + ADP + H(+). Its pathway is cofactor biosynthesis; thiamine diphosphate biosynthesis; 4-methyl-5-(2-phosphoethyl)-thiazole from 5-(2-hydroxyethyl)-4-methylthiazole: step 1/1. Its function is as follows. Catalyzes the phosphorylation of the hydroxyl group of 4-methyl-5-beta-hydroxyethylthiazole (THZ). This Staphylococcus carnosus (strain TM300) protein is Hydroxyethylthiazole kinase.